The sequence spans 163 residues: Peptidyl-prolyl cis-trans isomerase-like 1 (163 aa).

A PPIase cyclophilin-type domain is found at 1-155 (MATDVAVETT…TEVKIVKARV (155 aa)).

It belongs to the cyclophilin-type PPIase family. PPIL1 subfamily.

The catalysed reaction is [protein]-peptidylproline (omega=180) = [protein]-peptidylproline (omega=0). Functionally, PPIases accelerate the folding of proteins. It catalyzes the cis-trans isomerization of proline imidic peptide bonds in oligopeptides. This Neurospora crassa (strain ATCC 24698 / 74-OR23-1A / CBS 708.71 / DSM 1257 / FGSC 987) protein is Peptidyl-prolyl cis-trans isomerase-like 1 (ppi-1).